A 64-amino-acid polypeptide reads, in one-letter code: Toxin Tce3 (64 aa).

Residues 1-62 (KDGYIIEHRG…IFDSNNNKCS (62 aa)) form the LCN-type CS-alpha/beta domain. 4 disulfides stabilise this stretch: C11–C61, C15–C37, C23–C42, and C27–C44.

The protein belongs to the long (4 C-C) scorpion toxin superfamily. Sodium channel inhibitor family. Beta subfamily. Expressed by the venom gland.

It is found in the secreted. Functionally, inhibits the sodium (Nav) currents in an apparent irreversible manner. Produces small depolarization and induces repetitive firing in squid axons. Is specific for arthropods (crickets, triatomides, crabs and squids), but is non-toxic to mice. Shows antibacterial activity against both Gram-positive and Gram-negative bacteria. This is Toxin Tce3 from Tityus cerroazul (Scorpion).